A 157-amino-acid polypeptide reads, in one-letter code: Succinate dehydrogenase assembly factor 2-A, mitochondrial (157 aa).

The protein belongs to the SDHAF2 family. As to quaternary structure, interacts with the flavoprotein subunit within the SDH catalytic dimer.

Its subcellular location is the mitochondrion matrix. In terms of biological role, plays an essential role in the assembly of succinate dehydrogenase (SDH), an enzyme complex (also referred to as respiratory complex II) that is a component of both the tricarboxylic acid (TCA) cycle and the mitochondrial electron transport chain, and which couples the oxidation of succinate to fumarate with the reduction of ubiquinone (coenzyme Q) to ubiquinol. Required for flavinylation (covalent attachment of FAD) of the flavoprotein subunit of the SDH catalytic dimer. The polypeptide is Succinate dehydrogenase assembly factor 2-A, mitochondrial (Drosophila willistoni (Fruit fly)).